Here is a 426-residue protein sequence, read N- to C-terminus: Serine--tRNA ligase (426 aa).

An L-serine-binding site is contributed by 231 to 233 (TSE). Position 262-264 (262-264 (RSE)) interacts with ATP. Glu-285 serves as a coordination point for L-serine. 349–352 (EISS) provides a ligand contact to ATP. Ser-385 is a binding site for L-serine.

Belongs to the class-II aminoacyl-tRNA synthetase family. Type-1 seryl-tRNA synthetase subfamily. As to quaternary structure, homodimer. The tRNA molecule binds across the dimer.

The protein localises to the cytoplasm. It catalyses the reaction tRNA(Ser) + L-serine + ATP = L-seryl-tRNA(Ser) + AMP + diphosphate + H(+). The enzyme catalyses tRNA(Sec) + L-serine + ATP = L-seryl-tRNA(Sec) + AMP + diphosphate + H(+). Its pathway is aminoacyl-tRNA biosynthesis; selenocysteinyl-tRNA(Sec) biosynthesis; L-seryl-tRNA(Sec) from L-serine and tRNA(Sec): step 1/1. Catalyzes the attachment of serine to tRNA(Ser). Is also able to aminoacylate tRNA(Sec) with serine, to form the misacylated tRNA L-seryl-tRNA(Sec), which will be further converted into selenocysteinyl-tRNA(Sec). This chain is Serine--tRNA ligase, found in Legionella pneumophila (strain Corby).